Here is a 969-residue protein sequence, read N- to C-terminus: Isoleucine--tRNA ligase (969 aa).

The short motif at 68–78 (PYANGALHMGH) is the 'HIGH' region element. Residue glutamate 585 coordinates L-isoleucyl-5'-AMP. Residues 626 to 630 (KMSKS) carry the 'KMSKS' region motif. Position 629 (lysine 629) interacts with ATP. Zn(2+) is bound by residues cysteine 939, cysteine 942, cysteine 959, and cysteine 962.

This sequence belongs to the class-I aminoacyl-tRNA synthetase family. IleS type 1 subfamily. Monomer. It depends on Zn(2+) as a cofactor.

The protein localises to the cytoplasm. It carries out the reaction tRNA(Ile) + L-isoleucine + ATP = L-isoleucyl-tRNA(Ile) + AMP + diphosphate. Its function is as follows. Catalyzes the attachment of isoleucine to tRNA(Ile). As IleRS can inadvertently accommodate and process structurally similar amino acids such as valine, to avoid such errors it has two additional distinct tRNA(Ile)-dependent editing activities. One activity is designated as 'pretransfer' editing and involves the hydrolysis of activated Val-AMP. The other activity is designated 'posttransfer' editing and involves deacylation of mischarged Val-tRNA(Ile). The sequence is that of Isoleucine--tRNA ligase from Prochlorococcus marinus (strain MIT 9211).